A 464-amino-acid chain; its full sequence is Trigger factor (464 aa).

In terms of domain architecture, PPIase FKBP-type spans 162–243 (GDFISIDLSA…VGTVKERELP (82 aa)). The interval 435 to 464 (ELFGNGEAETEEAASTDEAASDSTESEDQK) is disordered.

Belongs to the FKBP-type PPIase family. Tig subfamily.

The protein resides in the cytoplasm. The catalysed reaction is [protein]-peptidylproline (omega=180) = [protein]-peptidylproline (omega=0). Functionally, involved in protein export. Acts as a chaperone by maintaining the newly synthesized protein in an open conformation. Functions as a peptidyl-prolyl cis-trans isomerase. The polypeptide is Trigger factor (Rhodococcus jostii (strain RHA1)).